The primary structure comprises 277 residues: Release factor glutamine methyltransferase (277 aa).

S-adenosyl-L-methionine is bound by residues 117-121, aspartate 140, tryptophan 168, and asparagine 183; that span reads GTGTG. 183–186 contacts substrate; the sequence is NPPY.

This sequence belongs to the protein N5-glutamine methyltransferase family. PrmC subfamily.

It carries out the reaction L-glutaminyl-[peptide chain release factor] + S-adenosyl-L-methionine = N(5)-methyl-L-glutaminyl-[peptide chain release factor] + S-adenosyl-L-homocysteine + H(+). Its function is as follows. Methylates the class 1 translation termination release factors RF1/PrfA and RF2/PrfB on the glutamine residue of the universally conserved GGQ motif. In Shigella flexneri, this protein is Release factor glutamine methyltransferase.